The sequence spans 71 residues: Protein DP71L (71 aa).

2 important for host CHOP inhibition regions span residues 16–18 (VRF) and 57–61 (LSAVL).

Belongs to the asfivirus DP71L family. In terms of assembly, interacts (via C-terminus) with host PPP1CB.

In terms of biological role, interacts with the host phosphatase PP1 catalytic subunit (PPP1CB) and recruits it to dephosphorylate EIF2S1/eIF2alpha and therefore restores the host translation that has been shut-down by the host. Also inhibits the EIF2S1/eIF2alpha-ATF4-DDIT3/CHOP pathway. The polypeptide is Protein DP71L (Ornithodoros (relapsing fever ticks)).